The primary structure comprises 483 residues: Regulatory protein ViaA (483 aa).

This sequence belongs to the ViaA family. In terms of assembly, homodimer. Interacts with RavA.

It is found in the cytoplasm. Component of the RavA-ViaA chaperone complex, which may act on the membrane to optimize the function of some of the respiratory chains. ViaA stimulates the ATPase activity of RavA. The chain is Regulatory protein ViaA from Escherichia coli O127:H6 (strain E2348/69 / EPEC).